The following is a 405-amino-acid chain: Corticosteroid-binding globulin (405 aa).

The signal sequence occupies residues 1–22 (MPLLLYTCLLWLSTSGLWTVQA). Asn26, Asn31, Asn96, and Asn260 each carry an N-linked (GlcNAc...) asparagine glycan. Asn286 contributes to the cortisol binding site. 2 N-linked (GlcNAc...) asparagine glycosylation sites follow: Asn330 and Asn369. Trp393 contributes to the cortisol binding site.

This sequence belongs to the serpin family. As to expression, expressed by the liver; secreted in plasma.

The protein resides in the secreted. Its function is as follows. Major transport protein for glucocorticoids and progestins in the blood of almost all vertebrate species. The protein is Corticosteroid-binding globulin (SERPINA6) of Pongo abelii (Sumatran orangutan).